Reading from the N-terminus, the 198-residue chain is Transcription antitermination protein NusB (198 aa).

The protein belongs to the NusB family.

In terms of biological role, involved in transcription antitermination. Required for transcription of ribosomal RNA (rRNA) genes. Binds specifically to the boxA antiterminator sequence of the ribosomal RNA (rrn) operons. This is Transcription antitermination protein NusB from Methylococcus capsulatus (strain ATCC 33009 / NCIMB 11132 / Bath).